A 319-amino-acid chain; its full sequence is Homeobox protein Hox-B5a (319 aa).

Residues 114 to 224 (SLLSPGSGDT…NTVGSEGQPP (111 aa)) are disordered. Residues 128–155 (RSSSPRSEQSGSGNLSSTNLSSSTNISS) show a composition bias toward low complexity. The short motif at 226–231 (IFPWMR) is the Antp-type hexapeptide element. The segment at residues 244–303 (GKRARTAYTRYQTLELEKEFHFNRYLTRRRRIEIAHALCLTERQIKIWFQNRRMKWKKDN) is a DNA-binding region (homeobox).

It belongs to the Antp homeobox family.

The protein localises to the nucleus. In terms of biological role, sequence-specific transcription factor which is part of a developmental regulatory system that provides cells with specific positional identities on the anterior-posterior axis. The polypeptide is Homeobox protein Hox-B5a (hoxb5a) (Takifugu rubripes (Japanese pufferfish)).